The following is a 287-amino-acid chain: Acetylglutamate kinase (287 aa).

Residues 70 to 71 (GG), Arg-92, and Asn-184 each bind substrate.

This sequence belongs to the acetylglutamate kinase family. ArgB subfamily.

It localises to the cytoplasm. It carries out the reaction N-acetyl-L-glutamate + ATP = N-acetyl-L-glutamyl 5-phosphate + ADP. Its pathway is amino-acid biosynthesis; L-arginine biosynthesis; N(2)-acetyl-L-ornithine from L-glutamate: step 2/4. Functionally, catalyzes the ATP-dependent phosphorylation of N-acetyl-L-glutamate. The sequence is that of Acetylglutamate kinase from Roseobacter denitrificans (strain ATCC 33942 / OCh 114) (Erythrobacter sp. (strain OCh 114)).